The sequence spans 556 residues: Cytochrome P450 4g1 (556 aa).

Heme contacts are provided by E356 and C497.

This sequence belongs to the cytochrome P450 family. Heme is required as a cofactor.

The protein resides in the endoplasmic reticulum membrane. The protein localises to the microsome membrane. Its function is as follows. May be involved in the metabolism of insect hormones and in the breakdown of synthetic insecticides. This Drosophila melanogaster (Fruit fly) protein is Cytochrome P450 4g1 (Cyp4g1).